Consider the following 345-residue polypeptide: Eukaryotic translation initiation factor 3 subunit F (345 aa).

Residues 30–166 (VVIQPQAIFS…TRAYISAPVG (137 aa)) enclose the MPN domain. The interval 308 to 345 (GGESGGAESGAQRGQRGGKGGRGGQQRNQERGAEEARA) is disordered. Residues 322-331 (QRGGKGGRGG) show a composition bias toward gly residues. Residues 335 to 345 (NQERGAEEARA) show a composition bias toward basic and acidic residues.

This sequence belongs to the eIF-3 subunit F family. In terms of assembly, component of the eukaryotic translation initiation factor 3 (eIF-3) complex.

Its subcellular location is the cytoplasm. In terms of biological role, component of the eukaryotic translation initiation factor 3 (eIF-3) complex, which is involved in protein synthesis of a specialized repertoire of mRNAs and, together with other initiation factors, stimulates binding of mRNA and methionyl-tRNAi to the 40S ribosome. The eIF-3 complex specifically targets and initiates translation of a subset of mRNAs involved in cell proliferation. The sequence is that of Eukaryotic translation initiation factor 3 subunit F from Aspergillus clavatus (strain ATCC 1007 / CBS 513.65 / DSM 816 / NCTC 3887 / NRRL 1 / QM 1276 / 107).